Reading from the N-terminus, the 123-residue chain is Small ribosomal subunit protein uS12 (123 aa).

3-methylthioaspartic acid is present on Asp89.

It belongs to the universal ribosomal protein uS12 family. In terms of assembly, part of the 30S ribosomal subunit. Contacts proteins S8 and S17. May interact with IF1 in the 30S initiation complex.

With S4 and S5 plays an important role in translational accuracy. Functionally, interacts with and stabilizes bases of the 16S rRNA that are involved in tRNA selection in the A site and with the mRNA backbone. Located at the interface of the 30S and 50S subunits, it traverses the body of the 30S subunit contacting proteins on the other side and probably holding the rRNA structure together. The combined cluster of proteins S8, S12 and S17 appears to hold together the shoulder and platform of the 30S subunit. The chain is Small ribosomal subunit protein uS12 from Anaeromyxobacter sp. (strain Fw109-5).